The sequence spans 950 residues: MKLSELFNPNEFAARHLSFGDEAALLAAVGEKSMDDFVGNTLPQSIRMPSELDLPEALTEADALAKLKGIASKNVINKSYIGLGYYPTRVPNVILRNVLENPGWYTAYTPYQAEIAQGRLEALLNFQQVCIDLTGFPVAGASLLDEATAAAEAMAMAHRVGKVKSERFFVDARVYPQTLDVMKTRAKYFGFELVVSDFAQADEGEYFGALFQYVGKDGDVQDLQDVIGRLKAKGTIVAVAADIMSLVLLKSPAELGADIALGNTQRFGVPMGFGGPHAAYFAFKDEFKRSAPGRIIGVSKDASGKPALRMALSTREQHIRREKATSNICTAQALLTNLAGMYAVYHGPKGVKRIANRIHTLASVFADALVSDGLKVVHEVFFDTVTVDFGSKEKADQVFAAALESGYNLRRVNNTQVAAAFHETSVYEDLADLYRAFTGKDTFTFADDVKGRLNAELLRQDDILQHPVYNSYHTEHEMLRYLKKLEDRDLAMNRSMISLGSCTMKLNATAEMLPITWTEFSDIHPYAPEAQTAGYRELLADMENSLKAITGFDAISFQPNSGAQGEYSGMLAIRRYQEAQGEAHRNICLIPKSAHGTNPATAAMLGLKVVVVDTDEHGNVNIDDLKAKAEQHRDALSAIMITYPSTHGVYEEGIRDICRIIHENGGQVYMDGANLNAQIGIMQPAEVGADVLHMNLHKTFCIPHGGGGPGMGPIGLKAHLAPFAPGHTLTDTHSASAGQTSVAAAAFGSASILPITWMYLTMMGKQGMEQATRWALLNANYVAKRLSEDYPILYTGKNGRIAHECIVDLRPLKAESGITETDIAKRLMDYGFHAPTVSFPVAGTLMIEPTESESKAELDRFIAALKSIRREVQKVIDGEWPKDDNPLVNAPHTAADITGEWAHPYSREEAVFPLPFVREHKFWPFVNRVDDVYGDRNLVCSCPPMENYED.

Lysine 698 is subject to N6-(pyridoxal phosphate)lysine.

Belongs to the GcvP family. In terms of assembly, the glycine cleavage system is composed of four proteins: P, T, L and H. It depends on pyridoxal 5'-phosphate as a cofactor.

It carries out the reaction N(6)-[(R)-lipoyl]-L-lysyl-[glycine-cleavage complex H protein] + glycine + H(+) = N(6)-[(R)-S(8)-aminomethyldihydrolipoyl]-L-lysyl-[glycine-cleavage complex H protein] + CO2. The glycine cleavage system catalyzes the degradation of glycine. The P protein binds the alpha-amino group of glycine through its pyridoxal phosphate cofactor; CO(2) is released and the remaining methylamine moiety is then transferred to the lipoamide cofactor of the H protein. This Neisseria gonorrhoeae (strain NCCP11945) protein is Glycine dehydrogenase (decarboxylating).